The primary structure comprises 214 residues: Thioredoxin-like 4, chloroplastic (214 aa).

Low complexity predominate over residues 1 to 20 (MITASLLPLPATSSSSGRRS). The tract at residues 1 to 68 (MITASLLPLP…STNGSLPGLP (68 aa)) is disordered. The N-terminal 71 residues, 1–71 (MITASLLPLP…GSLPGLPPVV (71 aa)), are a transit peptide targeting the chloroplast. A compositionally biased stretch (pro residues) spans 21 to 34 (LPPPTTTFPRPPPP). A compositionally biased stretch (low complexity) spans 42-53 (SSSSSSASSTES). A Thioredoxin domain is found at 72–199 (VEEEEEEFCP…IIAAIQKYTA (128 aa)). Residues Cys-117 and Cys-120 each act as nucleophile in the active site. Cys-117 and Cys-120 form a disulfide bridge.

The protein belongs to the thioredoxin family.

The protein resides in the plastid. It localises to the chloroplast. Functionally, probable thiol-disulfide oxidoreductase that may participate in various redox reactions. The polypeptide is Thioredoxin-like 4, chloroplastic (Oryza sativa subsp. japonica (Rice)).